The sequence spans 505 residues: MTDSKKYILTLDEGTTSARALITDKQGNIIAVEQSEFTQYFPKEGWVEHDAIEIWNTQRSALVQVLNKSGIDPSQIEAIGITNQRETAVIWNKETGLPIYNAIVWQDQRTADYCQTFDKDTLEMVKQRSGLIINPYFSGTKVKWILDNVPNARQLAKEGKLMFGTINTWLIYRLTGGEVFVTDHTNAQRTLLYNIHTNDWDDELLKLFDIPRNILPEIKSCSEVYGYTFKGLFSKGNEQRIKIASSIGDQQSALFGQLCLEKGQVKVTYGTGCFILTNTGEEIVKSNHGLLTTVAYSFKDKVYYALEGSVMIAGAAVQWLRDNLRIVYNAIETEWYADQVKDDRRVYVVPSFTGLGSPYWDSFSRGAIFGLDRGTRREHIVRATLEAIVYQANDVVDAMRKDMKKPIEIFKVDGGAANNKFLMQFQSNISQSKVIKPTNVETTAMGAAFMVGLAVGYWENAEELKKTYKVHFELTPELSKPEVDKLIKGWKVAVQRTFKWVEEIE.

ADP is bound at residue Thr-15. ATP-binding residues include Thr-15, Thr-16, and Ser-17. Residue Thr-15 coordinates sn-glycerol 3-phosphate. Residue Arg-19 coordinates ADP. 4 residues coordinate sn-glycerol 3-phosphate: Arg-85, Glu-86, Tyr-136, and Asp-249. Glycerol-binding residues include Arg-85, Glu-86, Tyr-136, Asp-249, and Gln-250. Positions 271 and 314 each coordinate ADP. Residues Thr-271, Gly-314, Gln-318, and Gly-415 each contribute to the ATP site. ADP is bound by residues Gly-415 and Asn-419.

This sequence belongs to the FGGY kinase family.

It carries out the reaction glycerol + ATP = sn-glycerol 3-phosphate + ADP + H(+). Its pathway is polyol metabolism; glycerol degradation via glycerol kinase pathway; sn-glycerol 3-phosphate from glycerol: step 1/1. Its activity is regulated as follows. Inhibited by fructose 1,6-bisphosphate (FBP). Its function is as follows. Key enzyme in the regulation of glycerol uptake and metabolism. Catalyzes the phosphorylation of glycerol to yield sn-glycerol 3-phosphate. The polypeptide is Glycerol kinase (Mycoplasma mycoides subsp. mycoides SC (strain CCUG 32753 / NCTC 10114 / PG1)).